The sequence spans 90 residues: U7-theraphotoxin-Hhn1b (90 aa).

Positions 1-19 are cleaved as a signal peptide; that stretch reads MKTAIFTVVLALAVFAVLS. Residues 20–50 constitute a propeptide that is removed on maturation; it reads FGWEANEKALSEEFTELIHEKEAASETEARE. Disulfide bonds link Cys51–Cys65, Cys58–Cys70, and Cys64–Cys81.

It belongs to the neurotoxin 10 (Hwtx-1) family. 13 (Hntx-13) subfamily. Expressed by the venom gland.

It localises to the secreted. Functionally, ion channel inhibitor. The sequence is that of U7-theraphotoxin-Hhn1b from Cyriopagopus hainanus (Chinese bird spider).